Here is a 459-residue protein sequence, read N- to C-terminus: UDP-N-acetylmuramate--L-alanine ligase (459 aa).

118 to 124 lines the ATP pocket; that stretch reads GTHGKTT.

It belongs to the MurCDEF family.

The protein localises to the cytoplasm. It carries out the reaction UDP-N-acetyl-alpha-D-muramate + L-alanine + ATP = UDP-N-acetyl-alpha-D-muramoyl-L-alanine + ADP + phosphate + H(+). It participates in cell wall biogenesis; peptidoglycan biosynthesis. In terms of biological role, cell wall formation. The sequence is that of UDP-N-acetylmuramate--L-alanine ligase from Agathobacter rectalis (strain ATCC 33656 / DSM 3377 / JCM 17463 / KCTC 5835 / VPI 0990) (Eubacterium rectale).